A 218-amino-acid polypeptide reads, in one-letter code: Phosphatidylserine decarboxylase proenzyme (218 aa).

S187 (schiff-base intermediate with substrate; via pyruvic acid) is an active-site residue. Pyruvic acid (Ser); by autocatalysis is present on S187.

The protein belongs to the phosphatidylserine decarboxylase family. PSD-A subfamily. As to quaternary structure, heterodimer of a large membrane-associated beta subunit and a small pyruvoyl-containing alpha subunit. Requires pyruvate as cofactor. Is synthesized initially as an inactive proenzyme. Formation of the active enzyme involves a self-maturation process in which the active site pyruvoyl group is generated from an internal serine residue via an autocatalytic post-translational modification. Two non-identical subunits are generated from the proenzyme in this reaction, and the pyruvate is formed at the N-terminus of the alpha chain, which is derived from the carboxyl end of the proenzyme. The post-translation cleavage follows an unusual pathway, termed non-hydrolytic serinolysis, in which the side chain hydroxyl group of the serine supplies its oxygen atom to form the C-terminus of the beta chain, while the remainder of the serine residue undergoes an oxidative deamination to produce ammonia and the pyruvoyl prosthetic group on the alpha chain.

It localises to the cell membrane. It catalyses the reaction a 1,2-diacyl-sn-glycero-3-phospho-L-serine + H(+) = a 1,2-diacyl-sn-glycero-3-phosphoethanolamine + CO2. It functions in the pathway phospholipid metabolism; phosphatidylethanolamine biosynthesis; phosphatidylethanolamine from CDP-diacylglycerol: step 2/2. Its function is as follows. Catalyzes the formation of phosphatidylethanolamine (PtdEtn) from phosphatidylserine (PtdSer). In Geobacter sulfurreducens (strain ATCC 51573 / DSM 12127 / PCA), this protein is Phosphatidylserine decarboxylase proenzyme.